The primary structure comprises 223 residues: Peroxynitrite isomerase 1 (223 aa).

The GXWXGXG signature appears at 69–75; it reads GVWRGEG. Heme b-binding residues include Lys-186 and His-213.

It belongs to the nitrobindin family. As to quaternary structure, homodimer. The cofactor is heme b.

It carries out the reaction peroxynitrite = nitrate. It participates in nitrogen metabolism. Its function is as follows. Heme-binding protein able to scavenge peroxynitrite and to protect free L-tyrosine against peroxynitrite-mediated nitration, by acting as a peroxynitrite isomerase that converts peroxynitrite to nitrate. Therefore, this protein likely plays a role in peroxynitrite sensing and in the detoxification of reactive nitrogen and oxygen species (RNS and ROS, respectively). Is able to bind nitric oxide (NO) in vitro, but may act as a sensor of peroxynitrite levels in vivo. The polypeptide is Peroxynitrite isomerase 1 (Mycobacterium marinum (strain ATCC BAA-535 / M)).